We begin with the raw amino-acid sequence, 1331 residues long: Mitogen-activated protein kinase kinase kinase 15 (1331 aa).

The span at 1-13 shows a compositional bias: gly residues; the sequence is MEGGGGSGGGGGP. Residues 1-61 are disordered; that stretch reads MEGGGGSGGG…GEAEGGRGPR (61 aa). One can recognise a Protein kinase domain in the interval 656–912; the sequence is NGERVVLGKG…AADLLQEGFL (257 aa). ATP is bound by residues 662 to 670 and K685; that span reads LGKGSYGIV. The active-site Proton acceptor is D777. 2 disordered regions span residues 934–964 and 983–1005; these read GTGTLALPSSGELVGSSSSEHGSISPDSDAQ and LSVPDESPALDDRSTALPPEERD. Over residues 940–962 the composition is skewed to low complexity; the sequence is LPSSGELVGSSSSEHGSISPDSD. The segment covering 992–1005 has biased composition (basic and acidic residues); sequence LDDRSTALPPEERD. Positions 1216 to 1236 form a coiled coil; that stretch reads LVQKEREYQNLLRLILDQKTQ.

This sequence belongs to the protein kinase superfamily. STE Ser/Thr protein kinase family. MAP kinase kinase kinase subfamily. It depends on Mg(2+) as a cofactor.

The catalysed reaction is L-seryl-[protein] + ATP = O-phospho-L-seryl-[protein] + ADP + H(+). It catalyses the reaction L-threonyl-[protein] + ATP = O-phospho-L-threonyl-[protein] + ADP + H(+). Its activity is regulated as follows. Contains an N-terminal autoinhibitory domain. Activated by phosphorylation at Thr-816, inhibited by phosphorylation at Ser-928. In terms of biological role, serine/threonine kinase which acts as a component of the MAP kinase signal transduction pathway. Once activated, acts as an upstream activator of the p38 MAPK signal transduction cascade through the phosphorylation and activation of several MAP kinase kinases. May function in a signal transduction pathway that is activated by various cell stresses and leads to apoptosis. Involved in phosphorylation of WNK4 in response to osmotic stress or hypotonic low-chloride stimulation via the p38 MAPK signal transduction cascade. In Mus musculus (Mouse), this protein is Mitogen-activated protein kinase kinase kinase 15.